The sequence spans 480 residues: 2-succinylbenzoate--CoA ligase (480 aa).

It belongs to the ATP-dependent AMP-binding enzyme family. MenE subfamily.

The catalysed reaction is 2-succinylbenzoate + ATP + CoA = 2-succinylbenzoyl-CoA + AMP + diphosphate. The protein operates within quinol/quinone metabolism; 1,4-dihydroxy-2-naphthoate biosynthesis; 1,4-dihydroxy-2-naphthoate from chorismate: step 5/7. Its pathway is quinol/quinone metabolism; menaquinone biosynthesis. Converts 2-succinylbenzoate (OSB) to 2-succinylbenzoyl-CoA (OSB-CoA). The protein is 2-succinylbenzoate--CoA ligase of Oceanobacillus iheyensis (strain DSM 14371 / CIP 107618 / JCM 11309 / KCTC 3954 / HTE831).